The sequence spans 154 residues: Deoxyuridine 5'-triphosphate nucleotidohydrolase (154 aa).

Residues 72–74 (RSG), asparagine 85, 89–91 (LID), and methionine 99 contribute to the substrate site.

This sequence belongs to the dUTPase family. The cofactor is Mg(2+).

It catalyses the reaction dUTP + H2O = dUMP + diphosphate + H(+). It participates in pyrimidine metabolism; dUMP biosynthesis; dUMP from dCTP (dUTP route): step 2/2. This enzyme is involved in nucleotide metabolism: it produces dUMP, the immediate precursor of thymidine nucleotides and it decreases the intracellular concentration of dUTP so that uracil cannot be incorporated into DNA. This chain is Deoxyuridine 5'-triphosphate nucleotidohydrolase, found in Psychrobacter cryohalolentis (strain ATCC BAA-1226 / DSM 17306 / VKM B-2378 / K5).